Reading from the N-terminus, the 319-residue chain is Forkhead box protein B1 (319 aa).

A DNA-binding region (fork-head) is located at residues 13–107 (KPPYSYISLT…ENGSFLRRRK (95 aa)). The interval 278 to 310 (LSNSSPSMSPTSPQTATSQSSPATPSDTLTNPS) is disordered. Over residues 279 to 305 (SNSSPSMSPTSPQTATSQSSPATPSDT) the composition is skewed to low complexity.

In terms of tissue distribution, in early gastrulae, expressed in the inner layer of the posterior dorsal ectoderm and in non-involuted mesoderm. By the mid-gastrula stage, expressed solely in the posterior ectoderm. At the end of gastrulation, expressed in ectodermal regions fated to become diencephalon, midbrain and hindbrain, and weakly expressed in regions fated to become spinal cord and tailbud. At the neurula stage, expressed in the midbrain and posterior forebrain (diencephalon) but not in the more anterior forebrain (telencephalon). Also expressed posteriorly in rhombomere 5. At tailbud stages, expression remains in the anterior brain and is also detectable along the length of the central nervous system and in the tailbud.

It is found in the nucleus. Functionally, probable transcription factor. May be involved in the early anteroposterior patterning of the neuroectoderm. The protein is Forkhead box protein B1 of Xenopus laevis (African clawed frog).